We begin with the raw amino-acid sequence, 339 residues long: Biotin synthase (339 aa).

Residues asparagine 55 to arginine 282 form the Radical SAM core domain. [4Fe-4S] cluster is bound by residues cysteine 70, cysteine 74, and cysteine 77. Residues cysteine 114, cysteine 145, cysteine 205, and arginine 277 each contribute to the [2Fe-2S] cluster site.

Belongs to the radical SAM superfamily. Biotin synthase family. Homodimer. Requires [4Fe-4S] cluster as cofactor. It depends on [2Fe-2S] cluster as a cofactor.

It carries out the reaction (4R,5S)-dethiobiotin + (sulfur carrier)-SH + 2 reduced [2Fe-2S]-[ferredoxin] + 2 S-adenosyl-L-methionine = (sulfur carrier)-H + biotin + 2 5'-deoxyadenosine + 2 L-methionine + 2 oxidized [2Fe-2S]-[ferredoxin]. It participates in cofactor biosynthesis; biotin biosynthesis; biotin from 7,8-diaminononanoate: step 2/2. Functionally, catalyzes the conversion of dethiobiotin (DTB) to biotin by the insertion of a sulfur atom into dethiobiotin via a radical-based mechanism. The protein is Biotin synthase of Burkholderia ambifaria (strain ATCC BAA-244 / DSM 16087 / CCUG 44356 / LMG 19182 / AMMD) (Burkholderia cepacia (strain AMMD)).